The sequence spans 252 residues: tRNA-cytidine(32) 2-sulfurtransferase (252 aa).

Residues 37 to 42 (SGGKDS) carry the PP-loop motif motif. The [4Fe-4S] cluster site is built by C112, C115, and C202.

This sequence belongs to the TtcA family. Homodimer. Mg(2+) serves as cofactor. Requires [4Fe-4S] cluster as cofactor.

The protein resides in the cytoplasm. The enzyme catalyses cytidine(32) in tRNA + S-sulfanyl-L-cysteinyl-[cysteine desulfurase] + AH2 + ATP = 2-thiocytidine(32) in tRNA + L-cysteinyl-[cysteine desulfurase] + A + AMP + diphosphate + H(+). Its pathway is tRNA modification. Functionally, catalyzes the ATP-dependent 2-thiolation of cytidine in position 32 of tRNA, to form 2-thiocytidine (s(2)C32). The sulfur atoms are provided by the cysteine/cysteine desulfurase (IscS) system. The chain is tRNA-cytidine(32) 2-sulfurtransferase from Geotalea daltonii (strain DSM 22248 / JCM 15807 / FRC-32) (Geobacter daltonii).